The sequence spans 200 residues: MANKGPAYGMSRDVQSKIEKKYDDELEDRLVEWIVAQCGSSVGRPDRGRLGFQVWLKNGIVLSQLVNSLYPDGSKPVKIPDSPPTMVFKQMEQIAQFLKAAEDYGVVKTDMFQTVDLFEAKDMAAVQRTLVALGSLAVTKNDGHYHGDPNWFMKKAQEHKREFSESQLKEGKNIIGLQMGTNKGASQAGMSYGRPRQIIS.

Position 2 is an N-acetylalanine (Ala2). A Calponin-homology (CH) domain is found at Asp24–Ala137. A Calponin-like repeat occupies Ile175 to Ile199.

Belongs to the calponin family. As to quaternary structure, monomer. Gizzard, uterus, intestine, esophagus, aorta, and trace amounts in brain, liver and heart.

The protein localises to the cytoplasm. Functionally, actin cross-linking/gelling protein. In Gallus gallus (Chicken), this protein is Transgelin (TAGLN).